The sequence spans 601 residues: Glutathione-regulated potassium-efflux system protein KefB (601 aa).

13 consecutive transmembrane segments (helical) span residues 4–24, 29–49, 55–75, 87–107, 111–131, 152–172, 177–197, 207–227, 230–250, 262–282, 284–304, 324–344, and 356–376; these read ADLL…VPLA, IGAV…GLGF, EILH…GLEL, IFGV…GLLM, FLWQ…TAMA, VLLF…LLAG, HFDW…LIGG, FIAA…LVLS, LFMD…GVLL, AIDP…GMSL, LGVL…LVVI, MQFA…FSTA, and ALLL…MKGI. The 120-residue stretch at 400-519 folds into the RCK N-terminal domain; it reads KPQVIVVGFG…AGVTQFSRET (120 aa).

It belongs to the monovalent cation:proton antiporter 2 (CPA2) transporter (TC 2.A.37) family. KefB subfamily. As to quaternary structure, interacts with the regulatory subunit KefG.

It localises to the cell inner membrane. In terms of biological role, pore-forming subunit of a potassium efflux system that confers protection against electrophiles. Catalyzes K(+)/H(+) antiport. The polypeptide is Glutathione-regulated potassium-efflux system protein KefB (Salmonella paratyphi B (strain ATCC BAA-1250 / SPB7)).